Here is a 201-residue protein sequence, read N- to C-terminus: 3-isopropylmalate dehydratase small subunit (201 aa).

It belongs to the LeuD family. LeuD type 1 subfamily. Heterodimer of LeuC and LeuD.

The catalysed reaction is (2R,3S)-3-isopropylmalate = (2S)-2-isopropylmalate. The protein operates within amino-acid biosynthesis; L-leucine biosynthesis; L-leucine from 3-methyl-2-oxobutanoate: step 2/4. In terms of biological role, catalyzes the isomerization between 2-isopropylmalate and 3-isopropylmalate, via the formation of 2-isopropylmaleate. In Shewanella sp. (strain ANA-3), this protein is 3-isopropylmalate dehydratase small subunit.